Here is a 343-residue protein sequence, read N- to C-terminus: Selenide, water dikinase (343 aa).

Residue Sec15 is part of the active site. Sec15 is a non-standard amino acid (selenocysteine). ATP contacts are provided by residues Lys18 and 45–47 (TAD). Asp48 contacts Mg(2+). ATP is bound by residues Asp65, Asp88, and 135 to 137 (GHT). Asp88 is a Mg(2+) binding site. Asp223 is a binding site for Mg(2+).

Belongs to the selenophosphate synthase 1 family. Class I subfamily. In terms of assembly, homodimer. Mg(2+) serves as cofactor.

It carries out the reaction hydrogenselenide + ATP + H2O = selenophosphate + AMP + phosphate + 2 H(+). In terms of biological role, synthesizes selenophosphate from selenide and ATP. This chain is Selenide, water dikinase, found in Carboxydothermus hydrogenoformans (strain ATCC BAA-161 / DSM 6008 / Z-2901).